A 1670-amino-acid chain; its full sequence is MKALILLLLGACQALQPGLEYQYRYSARVASGIPSINRQFAAAGIQADVTVQMAADYSVVVQFSNIEVGDLNKVLDCDLRAPLPIEYHPLEDYVDLLEKPFRVIMNESHVPSYMEGPEEPIWISNVRKGFVNIFRVPLFWSTELHSTKLNYGAVEETLVGRCQNWYTSMKLPVNLAEEVNVQREHFMEEDIQRDAYSSSYTTKTKSKTSSKTSSKTSSKTSSKTSKTGKTSPGQLANVPHIEDTLWSVRRTTDFDMCENLVSLQIHSSKYTEDIIQRSSVASYLIRGDTHRRIEQVVVEGTITVLTNKEQHEHVDTFTNQTLELKAVREVGEPITVTYDVHPHYDWQYDIERPQGDQFIPLEQVLTGRPVTDQIVNSIMEYIKKTVDDLSHRMEHYPAKPENLAYIIGRLVEAVANLDYPYIQTLYTHFDGKGTMQKYIFVQLVIHAGTEPAVNFAVDNLSDILFYVTFYESIGVSLRTPAPIPKIMHSLINGEEGLHHSLGLMNFATLAHDACLSEDRKHFYFDYSCGPKTTCDPELIITNFIPYLVRELGNQGKDVWQRLIYLQALSNLGTPQTINVLKPIILGVTETNIFMRTNAIWSLSAYNMHKTALSQIYEILMPIIENKGEQFEIRNIAFLTLATWGPGHAWWQQLAVSTWHDPSPQFANFVTTTIYSISDSHTKLAETVSRIKHLCKPAAPASILHSTNFFLHEYLFSEEHGSRVNFAWFASVHGAIPEEVFLRIQREFFYGYTKVLKIDGQQRGLYNLMQLMKQKMTKPQKRPQSSAQEIVSGMWEELKEKIGFTSPESASDATLWLKLDRLIYVALQYHFMEGAPIPYGMYSGKPFYDKDLNTLIAFPTEIGIPFSVLYVAEDATWLNINGNPETSMTSGKMKVNVDFIFETSQVQFVDARAHVPWSKRPAVASGVYADTQLVLPLNVHASFDMYSQEIQLSIEPTNTQKIDVIKFEFIPYTVLENNYPGDVLVIENEYKPILHGEVPLFNDKHQAFPSDVGLWIQVATEGDIHHTPSIYEIITQLFSAHTSTHIWEQSIVFDPTLSTTKTVSFTFNYVSTGGSGSLVDRGDYDDGQISQGSFDEDFGQFSQVAGGSDQDIMEVDSFGTQSQTIERIMRLQQALISSGGHVRTISVEVELQGTPTRNYEASLTWAISSSASTRSSKVQVTLIKHPAVGVLEDPYTICLNAQIVKPHFNPFFTTEDVLTANYHSTVKAELFEGETCEEAPVLLLEASFDVSSNVKERVKEAIEKGCDYSTYAPGIDIITSPLYDHSHITATWTPDFPDNLKNITYYVDDIIKASLSKKIEFDHTSAHHASRVEIDATKCIETGLWTVRTEKPYAVSIINELELPAWANPIFTPAPLATTLLYGLTVGRTPVSCTIDETKVRTADGKVFAYEPSECWNAMTLDTTFDQRGAMLVRNTGQWEVRIIWQKEGLVIDMSPTNFLVNGEPAKGTDNRYTVLHHDDSHTIVFESGTSVKVSDKVEVLLGLDHRGHTTGICGNFDGEPSNDMVGPKGCYYTDGPLFALSWASPGEGCASFMYKNLKRDVVWYQENCPHFTYEPTGVTHADALYDCTEWVYHQRTEGQYHCKALSPMPVCRPECVASHPITTSVEYECRFSGHQQQAQQQQQQQVQGTQWEECFPHFYTLTYPSSCIPQ.

A signal peptide spans methionine 1–alanine 14. A vittelogenin region spans residues leucine 15–tyrosine 674. A Vitellogenin domain is found at leucine 15–leucine 764. Asparagine 106 is a glycosylation site (N-linked (GlcNAc...) asparagine). Low complexity predominate over residues serine 198 to serine 231. Residues serine 198–alanine 236 form a disordered region. Asparagine 319, asparagine 459, and asparagine 1301 each carry an N-linked (GlcNAc...) asparagine glycan. Residues valine 1390–alanine 1550 form the VWFD domain. 2 disulfide bridges follow: cysteine 1392–cysteine 1513 and cysteine 1414–cysteine 1549.

Homodimer; disulfide-linked. Also exists as oligomers. Glycosylated. Contains mannose and N-acetylglucosamine. Post-translationally, substrate of transglutaminase. In terms of tissue distribution, widely expressed with highest levels in gill and heart. Not expressed in hemocytes.

The protein localises to the secreted. In terms of biological role, forms stable clots in the presence of calcium. This Penaeus monodon (Giant tiger prawn) protein is Hemolymph clottable protein.